The chain runs to 215 residues: MRLRHKPWAKEYMEAQEHVFIQHPEQLKGNWSTEFGNDHPLFIEVGSGKGQFILGMAKQHPDVNFIAIELFESVAVSIVQKLVETPMPNVRVLTVDAKRLVDYFEAGEVDRVYLNFSDPWPKTRHAKRRLTYKTFLATYEAILPKAGEIHFKTDNRGLFEYSLQSMSQYGMFFTEISLDLHVNEPEDNIRTEYEERFSALGQPIYRMEAVFRPKN.

Positions 44, 69, 96, and 118 each coordinate S-adenosyl-L-methionine. The active site involves Asp-118. Residues Lys-122, Asp-154, and 191–194 contribute to the substrate site; that span reads TEYE.

The protein belongs to the class I-like SAM-binding methyltransferase superfamily. TrmB family.

It carries out the reaction guanosine(46) in tRNA + S-adenosyl-L-methionine = N(7)-methylguanosine(46) in tRNA + S-adenosyl-L-homocysteine. Its pathway is tRNA modification; N(7)-methylguanine-tRNA biosynthesis. Its function is as follows. Catalyzes the formation of N(7)-methylguanine at position 46 (m7G46) in tRNA. The polypeptide is tRNA (guanine-N(7)-)-methyltransferase (Exiguobacterium sp. (strain ATCC BAA-1283 / AT1b)).